Here is a 79-residue protein sequence, read N- to C-terminus: Reactive oxygen species modulator 1 (79 aa).

A helical membrane pass occupies residues 22-44 (GFVMGCAVGMAAGALFGPFSCLR). A sufficient for antibacterial activity region spans residues 42–60 (CLRIGMRGRELMGGIGKTM).

Belongs to the MGR2 family.

The protein localises to the mitochondrion inner membrane. Has antibacterial activity against a variety of bacteria including S.aureus, P.aeruginosa and M.tuberculosis. Acts by inducing bacterial membrane breakage. In terms of biological role, induces production of reactive oxygen species (ROS) which are necessary for cell proliferation. May play a role in inducing oxidative DNA damage and replicative senescence. May play a role in the coordination of mitochondrial morphology and cell proliferation. This chain is Reactive oxygen species modulator 1 (ROMO1), found in Sus scrofa (Pig).